A 75-amino-acid polypeptide reads, in one-letter code: Tautomerase PptA (75 aa).

Pro-2 (proton acceptor; via imino nitrogen) is an active-site residue.

Belongs to the 4-oxalocrotonate tautomerase family. PptA subfamily. In terms of assembly, homodimer.

Its subcellular location is the cytoplasm. The chain is Tautomerase PptA from Escherichia coli O139:H28 (strain E24377A / ETEC).